The primary structure comprises 91 residues: Large ribosomal subunit protein eL34 (91 aa).

It belongs to the eukaryotic ribosomal protein eL34 family.

This is Large ribosomal subunit protein eL34 from Thermofilum pendens (strain DSM 2475 / Hrk 5).